A 59-amino-acid chain; its full sequence is Large ribosomal subunit protein bL32 (59 aa).

A disordered region spans residues Met1–Glu59. Residues Arg49–Glu59 show a composition bias toward basic residues.

It belongs to the bacterial ribosomal protein bL32 family.

This is Large ribosomal subunit protein bL32 (rpmF) from Neisseria meningitidis serogroup A / serotype 4A (strain DSM 15465 / Z2491).